A 681-amino-acid polypeptide reads, in one-letter code: Structure-specific endonuclease subunit SLX4 (681 aa).

2 disordered regions span residues 239-305 (EREK…QEQL) and 505-528 (EVTG…NENL). The span at 251 to 261 (SDSSPEPTQLL) shows a compositional bias: polar residues. Residues 265–281 (IIEEEHEVDEEEEDNEN) are compositionally biased toward acidic residues. Composition is skewed to polar residues over residues 288–305 (QLAS…QEQL) and 518–528 (QVPSSPGNENL).

This sequence belongs to the SLX4 family. Forms a heterodimer with SLX1. In terms of processing, phosphorylated in response to DNA damage.

It localises to the nucleus. Regulatory subunit of the SLX1-SLX4 structure-specific endonuclease that resolves DNA secondary structures generated during DNA repair and recombination. Has endonuclease activity towards branched DNA substrates, introducing single-strand cuts in duplex DNA close to junctions with ss-DNA. This is Structure-specific endonuclease subunit SLX4 from Meyerozyma guilliermondii (strain ATCC 6260 / CBS 566 / DSM 6381 / JCM 1539 / NBRC 10279 / NRRL Y-324) (Yeast).